The following is a 355-amino-acid chain: C-C chemokine receptor type 1 (355 aa).

Residues 1-34 are Extracellular-facing; sequence METPNTTEDYDTTTEFDYGDATPCQKVNERAFGA. N-linked (GlcNAc...) asparagine glycosylation occurs at N5. 2 cysteine pairs are disulfide-bonded: C24-C273 and C106-C183. A helical membrane pass occupies residues 35–60; sequence QLLPPLYSLVFVIGLVGNILVVLVLV. Residues 61 to 64 lie on the Cytoplasmic side of the membrane; the sequence is QYKR. The helical transmembrane segment at 65–91 threads the bilayer; the sequence is LKNMTSIYLLNLAISDLLFLFTLPFWI. Residues 92-107 are Extracellular-facing; that stretch reads DYKLKDDWVFGDAMCK. The chain crosses the membrane as a helical span at residues 108–129; sequence ILSGFYYTGLYSEIFFIILLTI. Topologically, residues 130-146 are cytoplasmic; it reads DRYLAIVHAVFALRART. A helical membrane pass occupies residues 147 to 171; the sequence is VTFGVITSIIIWALAILASMPGLYF. The Extracellular portion of the chain corresponds to 172–197; the sequence is SKTQWEFTHHTCSLHFPHESLREWKL. The helical transmembrane segment at 198 to 223 threads the bilayer; the sequence is FQALKLNLFGLVLPLLVMIICYTGII. The Cytoplasmic segment spans residues 224–239; it reads KILLRRPNEKKSKAVR. A helical membrane pass occupies residues 240–264; sequence LIFVIMIIFFLFWTPYNLTILISVF. Over 265-281 the chain is Extracellular; the sequence is QDFLFTHECEQSRHLDL. Residues 282–305 traverse the membrane as a helical segment; it reads AVQVTEVIAYTHCCVNPVIYAFVG. Topologically, residues 306-355 are cytoplasmic; that stretch reads ERFRKYLRQLFHRRVAVHLVKWLPFLSVDRLERVSSTSPSTGEHELSAGF.

This sequence belongs to the G-protein coupled receptor 1 family. In terms of assembly, interacts with CREB3. Interacts with CCL3. Interacts with CCL15. Interacts with CCL23. Interacts with GNAI1. Interacts with PF4/CXCL4. In terms of tissue distribution, widely expressed in different hematopoietic cells.

The protein resides in the cell membrane. Functionally, chemokine receptor that plays a crucial role in regulating immune cell migration, inflammation, and immune responses. Contributes to the inflammatory response by recruiting immune cells, such as monocytes, macrophages, T-cells, and dendritic cells, to sites of inflammation for the clearance of pathogens and the resolution of tissue damage. When activated by its ligands including CCL3, CCL5-9, CCL13-16 and CCL23, triggers a signaling cascade within immune cells, leading to their migration towards the source of the chemokine. For example, mediates neutrophil migration after activation by CCL3 leading to the sequential release of TNF-alpha and leukotriene B4. Also mediates monocyte migration upon CXCL4 binding. Activation by CCL5 results in neuroinflammation through the ERK1/2 signaling pathway. This chain is C-C chemokine receptor type 1 (CCR1), found in Homo sapiens (Human).